The primary structure comprises 313 residues: Homoserine O-succinyltransferase (313 aa).

Cys-142 functions as the Acyl-thioester intermediate in the catalytic mechanism. 2 residues coordinate substrate: Lys-163 and Ser-192. Catalysis depends on His-235, which acts as the Proton acceptor. The active site involves Glu-237. Substrate is bound at residue Arg-249.

This sequence belongs to the MetA family.

Its subcellular location is the cytoplasm. It carries out the reaction L-homoserine + succinyl-CoA = O-succinyl-L-homoserine + CoA. Its pathway is amino-acid biosynthesis; L-methionine biosynthesis via de novo pathway; O-succinyl-L-homoserine from L-homoserine: step 1/1. In terms of biological role, transfers a succinyl group from succinyl-CoA to L-homoserine, forming succinyl-L-homoserine. This Shewanella sp. (strain MR-4) protein is Homoserine O-succinyltransferase.